The following is a 716-amino-acid chain: Epidermal growth factor receptor kinase substrate 8-like protein 1 (716 aa).

The region spanning 35–164 (QYHVNHLVTF…LQNYRSGRGE (130 aa)) is the PTB domain. Disordered stretches follow at residues 175–194 (EELR…QRRP), 203–249 (VEPS…GPEL), 404–472 (PGVE…ETES), 528–582 (YNIL…SLDP), and 600–628 (SRLA…PRSE). The residue at position 182 (Ser182) is a Phosphoserine. Thr187 bears the Phosphothreonine mark. Residues 435-446 (PWEDPVEKQLQH) are compositionally biased toward basic and acidic residues. The span at 453–464 (QSAPQVAVNGQQ) shows a compositional bias: polar residues. An SH3 domain is found at 477-536 (KARKWVLCNYDFQARNGSELSVKHRDVLEVLDDRRKWWKVRDHQGQEGYVPYNILTPHPG). A compositionally biased stretch (pro residues) spans 553 to 563 (TPPPPPAPAPA). Positions 682–713 (VQRALLEDREKVSELEAVMEKQKKKVEGETKT) form a coiled coil.

This sequence belongs to the EPS8 family. Interacts with ABI1. Part of a complex that contains SOS1, ABI1 and EPS8L2. Associates with F-actin. Detected in placenta, skin, mammary gland, bone marrow and stomach.

It is found in the cytoplasm. Functionally, stimulates guanine exchange activity of SOS1. May play a role in membrane ruffling and remodeling of the actin cytoskeleton. The sequence is that of Epidermal growth factor receptor kinase substrate 8-like protein 1 (Eps8l1) from Mus musculus (Mouse).